Here is a 236-residue protein sequence, read N- to C-terminus: Class B acid phosphatase (236 aa).

The signal sequence occupies residues 1–22 (MNHTLRSITLVLACVASLSANA). Aspartate 70 functions as the Nucleophile in the catalytic mechanism. The Mg(2+) site is built by aspartate 70 and aspartate 72. The active-site Proton donor is aspartate 72. Substrate contacts are provided by residues 138 to 139 (TG) and lysine 176. Position 191 (aspartate 191) interacts with Mg(2+).

Belongs to the class B bacterial acid phosphatase family. In terms of assembly, homotetramer. The cofactor is Mg(2+).

The protein localises to the periplasm. It carries out the reaction a phosphate monoester + H2O = an alcohol + phosphate. In terms of biological role, dephosphorylates several organic phosphate monoesters. Also has a phosphotransferase activity catalyzing the transfer of low-energy phosphate groups from organic phosphate monoesters to free hydroxyl groups of various organic compounds. The protein is Class B acid phosphatase of Marinomonas sp. (strain MWYL1).